The sequence spans 182 residues: Translation initiation factor IF-3 (182 aa).

The protein belongs to the IF-3 family. In terms of assembly, monomer.

Its subcellular location is the cytoplasm. IF-3 binds to the 30S ribosomal subunit and shifts the equilibrium between 70S ribosomes and their 50S and 30S subunits in favor of the free subunits, thus enhancing the availability of 30S subunits on which protein synthesis initiation begins. This chain is Translation initiation factor IF-3, found in Endomicrobium trichonymphae.